Reading from the N-terminus, the 118-residue chain is Large ribosomal subunit protein bL20 (118 aa).

The protein belongs to the bacterial ribosomal protein bL20 family.

In terms of biological role, binds directly to 23S ribosomal RNA and is necessary for the in vitro assembly process of the 50S ribosomal subunit. It is not involved in the protein synthesizing functions of that subunit. The sequence is that of Large ribosomal subunit protein bL20 from Sulfurihydrogenibium sp. (strain YO3AOP1).